Reading from the N-terminus, the 91-residue chain is Small ribosomal subunit protein uS19 (91 aa).

It belongs to the universal ribosomal protein uS19 family.

In terms of biological role, protein S19 forms a complex with S13 that binds strongly to the 16S ribosomal RNA. The polypeptide is Small ribosomal subunit protein uS19 (Synechococcus sp. (strain RCC307)).